Consider the following 823-residue polypeptide: Degenerin-like protein asic-1 (823 aa).

The Cytoplasmic portion of the chain corresponds to 1 to 38 (MGKNSLKRALELDVVDFAEHTSAHGIPRAYVSTGWRRY). Residues 39-59 (MWLLCFLFCLSCFGHQAYLIV) form a helical membrane-spanning segment. Residues 60 to 767 (ERFNRNDIIV…FGGQLGLWMG (708 aa)) are Extracellular-facing. Disulfide bonds link Cys-86-Cys-518 and Cys-494-Cys-501. Asn-228, Asn-326, Asn-347, Asn-415, and Asn-486 each carry an N-linked (GlcNAc...) asparagine glycan. Asn-527 and Asn-546 each carry an N-linked (GlcNAc...) asparagine glycan. Disulfide bonds link Cys-604/Cys-687, Cys-625/Cys-683, Cys-629/Cys-681, and Cys-638/Cys-664. The GAS motif; ion selectivity filter signature appears at 767–769 (GVS). Residues 768-788 (VSVITIGEVACFFFEVFISLI) traverse the membrane as a helical segment. The Cytoplasmic portion of the chain corresponds to 789–795 (SSNRTKR).

It belongs to the amiloride-sensitive sodium channel (TC 1.A.6) family. In terms of assembly, homotrimer. Heterotrimer; with other ASIC proteins producing channel with different properties.

It localises to the cell membrane. Its subcellular location is the postsynaptic cell membrane. The protein resides in the cell projection. The protein localises to the dendrite. The catalysed reaction is Na(+)(in) = Na(+)(out). It carries out the reaction K(+)(in) = K(+)(out). The enzyme catalyses Li(+)(in) = Li(+)(out). It catalyses the reaction Ca(2+)(in) = Ca(2+)(out). Functionally, forms voltage-independent, pH-gated trimeric sodium channels that act as postsynaptic excitatory receptors in the nervous system, playing a crucial role in regulating synaptic plasticity, learning, and memory. Promotes synaptic vesicle fusion to positively regulate the release of dopamine at dopaminergic neuron synapses. Displays high selectivity for sodium ions but can also permit the permeation of other cations. In Caenorhabditis elegans, this protein is Degenerin-like protein asic-1.